The chain runs to 366 residues: Galactoside alpha-(1,2)-fucosyltransferase 1 (366 aa).

Residues Met-1–His-8 are Cytoplasmic-facing. The helical; Signal-anchor for type II membrane protein transmembrane segment at Leu-9–Phe-25 threads the bilayer. The Lumenal portion of the chain corresponds to Leu-26–Pro-366. 3 N-linked (GlcNAc...) asparagine glycosylation sites follow: Asn-66, Asn-302, and Asn-328.

This sequence belongs to the glycosyltransferase 11 family.

The protein resides in the golgi apparatus. The protein localises to the golgi stack membrane. It catalyses the reaction a beta-D-galactosyl-(1-&gt;4)-N-acetyl-beta-D-glucosaminyl derivative + GDP-beta-L-fucose = an alpha-L-Fuc-(1-&gt;2)-beta-D-Gal-(1-&gt;4)-beta-D-GlcNAc derivative + GDP + H(+). The enzyme catalyses a ganglioside GA1 + GDP-beta-L-fucose = a ganglioside Fuc-GA1 + GDP + H(+). It carries out the reaction a beta-D-Gal-(1-&gt;3)-beta-D-GlcNAc-(1-&gt;3)-beta-D-Gal-(1-&gt;4)-beta-D-Glc-(1&lt;-&gt;1')-Cer(d18:1(4E)) + GDP-beta-L-fucose = alpha-L-fucosyl-(1-&gt;2)- beta-D-galactosyl-(1-&gt;3)-N-acetyl-beta-D-glucosaminyl-(1-&gt;3)-beta-D-galactosyl-(1-&gt;4)-beta-D-glucosyl-(1&lt;-&gt;1')-N-acylsphing-4-enine + GDP + H(+). The catalysed reaction is a neolactoside nLc4Cer(d18:1(4E)) + GDP-beta-L-fucose = a neolactoside IV(2)-alpha-Fuc-nLc4Cer(d18:1(4E)) + GDP + H(+). It catalyses the reaction a ganglioside GM1 + GDP-beta-L-fucose = a ganglioside Fuc-GM1 + GDP + H(+). The enzyme catalyses beta-D-galactosyl-(1-&gt;3)-N-acetyl-D-galactosamine + GDP-beta-L-fucose = alpha-L-fucosyl-(1-&gt;2)-beta-D-galactosyl-(1-&gt;3)-N-acetyl-D-galactosamine + GDP + H(+). It participates in protein modification; protein glycosylation. In terms of biological role, catalyzes the transfer of L-fucose, from a guanosine diphosphate-beta-L-fucose, to the terminal galactose residue of glycoconjugates through an alpha(1,2) linkage leading to H antigen synthesis that is an intermediate substrate in the synthesis of ABO blood group antigens. H antigen is essential for maturation of the glomerular layer of the main olfactory bulb, in cell migration and early cell-cell contacts during tumor associated angiogenesis. Preferentially fucosylates soluble lactose and to a lesser extent fucosylates glycolipids gangliosides GA1 and GM1a. In Alouatta caraya (Black howler monkey), this protein is Galactoside alpha-(1,2)-fucosyltransferase 1.